Consider the following 108-residue polypeptide: Putative double-stranded DNA mimic protein PBPRA1522 (108 aa).

It belongs to the putative dsDNA mimic protein family.

May act as a double-stranded DNA (dsDNA) mimic. Probably regulates the activity of a dsDNA-binding protein. This is Putative double-stranded DNA mimic protein PBPRA1522 from Photobacterium profundum (strain SS9).